The sequence spans 238 residues: Purine nucleoside phosphorylase DeoD-type (238 aa).

Residue His-4 participates in a purine D-ribonucleoside binding. Residues Gly-20, Arg-24, Arg-43, and 87–90 each bind phosphate; that span reads RVGS. A purine D-ribonucleoside contacts are provided by residues 179–181 and 203–204; these read EME and SD. The active-site Proton donor is the Asp-204.

The protein belongs to the PNP/UDP phosphorylase family. As to quaternary structure, homohexamer; trimer of homodimers.

It catalyses the reaction a purine D-ribonucleoside + phosphate = a purine nucleobase + alpha-D-ribose 1-phosphate. The catalysed reaction is a purine 2'-deoxy-D-ribonucleoside + phosphate = a purine nucleobase + 2-deoxy-alpha-D-ribose 1-phosphate. Its function is as follows. Catalyzes the reversible phosphorolytic breakdown of the N-glycosidic bond in the beta-(deoxy)ribonucleoside molecules, with the formation of the corresponding free purine bases and pentose-1-phosphate. This is Purine nucleoside phosphorylase DeoD-type from Histophilus somni (strain 2336) (Haemophilus somnus).